The sequence spans 297 residues: Thiosulfate sulfurtransferase (297 aa).

An N6-acetyllysine; alternate modification is found at lysine 14. Lysine 14 bears the N6-succinyllysine; alternate mark. In terms of domain architecture, Rhodanese 1 spans 25–143 (LGPGLRVLDA…WLKEGHPVTS (119 aa)). Serine 35 carries an O-linked (GlcNAc) serine glycan. Serine 38 carries the post-translational modification Phosphoserine. Lysine 136 is subject to N6-acetyllysine; alternate. Lysine 136 carries the N6-succinyllysine; alternate modification. The hinge stretch occupies residues 144–159 (EPSRPEPAVFKATLDR). N6-acetyllysine is present on lysine 163. The region spanning 173 to 288 (QSKRFQLVDS…WFHQAPPETR (116 aa)) is the Rhodanese 2 domain. Lysine 175 is subject to N6-acetyllysine; alternate. Lysine 175 carries the post-translational modification N6-succinyllysine; alternate. Arginine 187 serves as a coordination point for substrate. Residue lysine 224 is modified to N6-acetyllysine; alternate. Lysine 224 is subject to N6-succinyllysine; alternate. Position 236 is an N6-acetyllysine (lysine 236). Lysine 237 bears the N6-acetyllysine; alternate mark. N6-succinyllysine; alternate is present on lysine 237. Cysteine 248 functions as the Cysteine persulfide intermediate in the catalytic mechanism. Position 250 (lysine 250) interacts with substrate.

As to quaternary structure, monomer.

The protein localises to the mitochondrion matrix. It carries out the reaction thiosulfate + hydrogen cyanide = thiocyanate + sulfite + 2 H(+). Its function is as follows. Together with MRPL18, acts as a mitochondrial import factor for the cytosolic 5S rRNA. Only the nascent unfolded cytoplasmic form is able to bind to the 5S rRNA. Formation of iron-sulfur complexes and cyanide detoxification. Binds molecular oxygen and sulfur. This chain is Thiosulfate sulfurtransferase (TST), found in Cricetulus griseus (Chinese hamster).